Here is a 465-residue protein sequence, read N- to C-terminus: Chromosomal replication initiator protein DnaA (465 aa).

Residues 1–84 (MSLSLWQQCL…RFEVGSKPLV (84 aa)) are domain I, interacts with DnaA modulators. The interval 84–128 (VQTISQPAQSHHNPVSVARQQPVRMAPVRPSWDNSPVQAEHTYRS) is domain II. Positions 129–345 (NVNPKHTFDN…GALNRVIANA (217 aa)) are domain III, AAA+ region. Positions 173, 175, 176, and 177 each coordinate ATP. The tract at residues 346–465 (NFTGRSITID…FSNLIRTLSS (120 aa)) is domain IV, binds dsDNA.

This sequence belongs to the DnaA family. In terms of assembly, oligomerizes as a right-handed, spiral filament on DNA at oriC.

The protein localises to the cytoplasm. In terms of biological role, plays an essential role in the initiation and regulation of chromosomal replication. ATP-DnaA binds to the origin of replication (oriC) to initiate formation of the DNA replication initiation complex once per cell cycle. Binds the DnaA box (a 9 base pair repeat at the origin) and separates the double-stranded (ds)DNA. Forms a right-handed helical filament on oriC DNA; dsDNA binds to the exterior of the filament while single-stranded (ss)DNA is stabiized in the filament's interior. The ATP-DnaA-oriC complex binds and stabilizes one strand of the AT-rich DNA unwinding element (DUE), permitting loading of DNA polymerase. After initiation quickly degrades to an ADP-DnaA complex that is not apt for DNA replication. Binds acidic phospholipids. This is Chromosomal replication initiator protein DnaA from Pectobacterium atrosepticum (strain SCRI 1043 / ATCC BAA-672) (Erwinia carotovora subsp. atroseptica).